We begin with the raw amino-acid sequence, 708 residues long: Lactotransferrin (708 aa).

Positions 1-19 are cleaved as a signal peptide; the sequence is MKLFVPALLSLGALGLCLA. 2 Transferrin-like domains span residues 25–352 and 364–693; these read VRWC…NLRE and VVWC…NLKK. Intrachain disulfides connect cysteine 28-cysteine 64 and cysteine 38-cysteine 55. Aspartate 79 lines the Fe(3+) pocket. Lysine 92 is a catalytic residue. Residue tyrosine 111 participates in Fe(3+) binding. Disulfide bonds link cysteine 134–cysteine 217, cysteine 176–cysteine 192, cysteine 179–cysteine 202, cysteine 189–cysteine 200, and cysteine 250–cysteine 264. Residues arginine 140, alanine 142, and glycine 143 each coordinate hydrogencarbonate. Tyrosine 211 is a Fe(3+) binding site. An N-linked (GlcNAc...) (high mannose) asparagine glycan is attached at asparagine 252. Histidine 272 contributes to the Fe(3+) binding site. Residue serine 278 is the Nucleophile of the active site. A glycan (N-linked (GlcNAc...) asparagine) is linked at asparagine 300. 2 cysteine pairs are disulfide-bonded: cysteine 367/cysteine 399 and cysteine 377/cysteine 390. The N-linked (GlcNAc...) (complex) asparagine; alternate glycan is linked to asparagine 387. A glycan (N-linked (GlcNAc...) (high mannose) asparagine; alternate) is linked at asparagine 387. N-linked (GlcNAc...) (hybrid) asparagine; alternate glycosylation is present at asparagine 387. Fe(3+) is bound by residues aspartate 414 and tyrosine 452. 8 disulfide bridges follow: cysteine 424–cysteine 703, cysteine 444–cysteine 666, cysteine 476–cysteine 551, cysteine 500–cysteine 694, cysteine 510–cysteine 524, cysteine 521–cysteine 534, cysteine 592–cysteine 606, and cysteine 644–cysteine 649. Positions 478, 482, 484, and 485 each coordinate hydrogencarbonate. Asparagine 495 carries N-linked (GlcNAc...) (complex) asparagine; alternate glycosylation. Residue asparagine 495 is glycosylated (N-linked (GlcNAc...) (high mannose) asparagine; alternate). N-linked (GlcNAc...) (hybrid) asparagine; alternate glycosylation is present at asparagine 495. Tyrosine 545 serves as a coordination point for Fe(3+). A glycan (N-linked (GlcNAc...) (high mannose) asparagine) is linked at asparagine 564. A Fe(3+)-binding site is contributed by histidine 614.

Belongs to the transferrin family. Monomer. Found in a complex with LTF, CLU, EPPIN and SEMG1. Found in a complex with MPO and LTF; interacts directly with CP, allows Fe(3+) incorporation into LTF and activation of CP ferroxidase activity. In terms of processing, poly-N-acetyllactosaminic carbohydrate moiety seems to be needed for TLR4 activation.

It is found in the secreted. The protein localises to the cytoplasmic granule. Functionally, transferrins are iron binding transport proteins which can bind two Fe(3+) ions in association with the binding of an anion, usually bicarbonate. In terms of biological role, major iron-binding and multifunctional protein found in exocrine fluids such as breast milk and mucosal secretions. Has antimicrobial activity, which depends on the extracellular cation concentration. Antimicrobial properties include bacteriostasis, which is related to its ability to sequester free iron and thus inhibit microbial growth, as well as direct bactericidal properties leading to the release of lipopolysaccharides from the bacterial outer membrane. Can also prevent bacterial biofilm development in P.aeruginosa infection. Has weak antifungal activity against C.albicans. Has anabolic, differentiating and anti-apoptotic effects on osteoblasts and can also inhibit osteoclastogenesis, possibly playing a role in the regulation of bone growth. Promotes binding of species C adenoviruses to epithelial cells, promoting adenovirus infection. Can inhibit papillomavirus infections. Stimulates the TLR4 signaling pathway leading to NF-kappa-B activation and subsequent pro-inflammatory cytokine production while also interfering with the lipopolysaccharide (LPS)-stimulated TLR4 signaling. Inhibits neutrophil granulocyte migration to sites of apoptosis, when secreted by apoptotic cells. Stimulates VEGFA-mediated endothelial cell migration and proliferation. Binds heparin, chondroitin sulfate and possibly other glycosaminoglycans (GAGs). Also binds specifically to pneumococcal surface protein A (PspA), the lipid A portion of bacterial lipopolysaccharide (LPS), lysozyme and DNA. Lactoferricin binds to the bacterial surface and is crucial for the bactericidal functions. Has some antiviral activity against papillomavirus infection. N-terminal region shows strong antifungal activity against C.albicans. Contains two BBXB heparin-binding consensus sequences that appear to form the predominate functional GAG-binding site. Its function is as follows. The lactotransferrin transferrin-like domain 1 functions as a serine protease of the peptidase S60 family that cuts arginine rich regions. This function contributes to the antimicrobial activity. Shows a preferential cleavage at -Arg-Ser-Arg-Arg-|- and -Arg-Arg-Ser-Arg-|-, and of Z-Phe-Arg-|-aminomethylcoumarin sites. The polypeptide is Lactotransferrin (LTF) (Capra hircus (Goat)).